The chain runs to 291 residues: Small ribosomal subunit biogenesis GTPase RsgA 2 (291 aa).

The region spanning 63-221 is the CP-type G domain; sequence ENALVRPPVA…VADTPGFSSI (159 aa). GTP-binding positions include 112–115 and 164–172; these read SKMD and GQSGVGKST. Zn(2+) is bound by residues Cys245, Cys250, His252, and Cys258.

This sequence belongs to the TRAFAC class YlqF/YawG GTPase family. RsgA subfamily. Monomer. Associates with 30S ribosomal subunit, binds 16S rRNA. Requires Zn(2+) as cofactor.

It is found in the cytoplasm. In terms of biological role, one of several proteins that assist in the late maturation steps of the functional core of the 30S ribosomal subunit. Helps release RbfA from mature subunits. May play a role in the assembly of ribosomal proteins into the subunit. Circularly permuted GTPase that catalyzes slow GTP hydrolysis, GTPase activity is stimulated by the 30S ribosomal subunit. This is Small ribosomal subunit biogenesis GTPase RsgA 2 from Listeria monocytogenes serovar 1/2a (strain ATCC BAA-679 / EGD-e).